The chain runs to 385 residues: ATP phosphoribosyltransferase regulatory subunit (385 aa).

This sequence belongs to the class-II aminoacyl-tRNA synthetase family. HisZ subfamily. Heteromultimer composed of HisG and HisZ subunits.

Its subcellular location is the cytoplasm. The protein operates within amino-acid biosynthesis; L-histidine biosynthesis; L-histidine from 5-phospho-alpha-D-ribose 1-diphosphate: step 1/9. In terms of biological role, required for the first step of histidine biosynthesis. May allow the feedback regulation of ATP phosphoribosyltransferase activity by histidine. The protein is ATP phosphoribosyltransferase regulatory subunit of Laribacter hongkongensis (strain HLHK9).